Consider the following 288-residue polypeptide: Formamidopyrimidine-DNA glycosylase (288 aa).

Pro2 (schiff-base intermediate with DNA) is an active-site residue. Glu3 serves as the catalytic Proton donor. The Proton donor; for beta-elimination activity role is filled by Lys59. DNA-binding residues include His93, Arg112, and Lys168. The FPG-type zinc finger occupies 254–288; sequence NVYGRGGEPCKRCGAPIKRVVVGGRSTHYCATCQR. Arg278 functions as the Proton donor; for delta-elimination activity in the catalytic mechanism.

Belongs to the FPG family. In terms of assembly, monomer. Zn(2+) is required as a cofactor.

It catalyses the reaction Hydrolysis of DNA containing ring-opened 7-methylguanine residues, releasing 2,6-diamino-4-hydroxy-5-(N-methyl)formamidopyrimidine.. The enzyme catalyses 2'-deoxyribonucleotide-(2'-deoxyribose 5'-phosphate)-2'-deoxyribonucleotide-DNA = a 3'-end 2'-deoxyribonucleotide-(2,3-dehydro-2,3-deoxyribose 5'-phosphate)-DNA + a 5'-end 5'-phospho-2'-deoxyribonucleoside-DNA + H(+). In terms of biological role, involved in base excision repair of DNA damaged by oxidation or by mutagenic agents. Acts as a DNA glycosylase that recognizes and removes damaged bases. Has a preference for oxidized purines, such as 7,8-dihydro-8-oxoguanine (8-oxoG). Has AP (apurinic/apyrimidinic) lyase activity and introduces nicks in the DNA strand. Cleaves the DNA backbone by beta-delta elimination to generate a single-strand break at the site of the removed base with both 3'- and 5'-phosphates. The chain is Formamidopyrimidine-DNA glycosylase from Corynebacterium jeikeium (strain K411).